The following is a 303-amino-acid chain: Protoheme IX farnesyltransferase 1 (303 aa).

9 helical membrane passes run 18-38 (PGIIMGNLISVAGGFLLAAQG), 42-62 (LTLMFATMIGLSLVVASGCAV), 91-111 (AVLSFGIGLGIIGFAMLAIFT), 114-134 (LAVLFAAIGYVVYVGVYSLYM), 139-159 (VYGTLVGSFSGAVPPVVGYCA), 169-189 (VILLLMFSLWQMPHSYAIAIF), 213-233 (LHIVLYIAVFAVVSALLPLAG), 235-255 (TGIAFMAVTFATSLWWLAMAL), and 274-294 (FSIITITALSVTMALDFQVVA).

The protein belongs to the UbiA prenyltransferase family. Protoheme IX farnesyltransferase subfamily.

Its subcellular location is the cell inner membrane. The enzyme catalyses heme b + (2E,6E)-farnesyl diphosphate + H2O = Fe(II)-heme o + diphosphate. It functions in the pathway porphyrin-containing compound metabolism; heme O biosynthesis; heme O from protoheme: step 1/1. Converts heme B (protoheme IX) to heme O by substitution of the vinyl group on carbon 2 of heme B porphyrin ring with a hydroxyethyl farnesyl side group. In Shewanella frigidimarina (strain NCIMB 400), this protein is Protoheme IX farnesyltransferase 1.